Consider the following 202-residue polypeptide: Recombination protein RecR (202 aa).

The segment at 57–72 (CGVCRTFTEQPCCDIC) adopts a C4-type zinc-finger fold. A Toprim domain is found at 81–176 (GQICVVESPS…STTKIAHGVP (96 aa)).

This sequence belongs to the RecR family.

May play a role in DNA repair. It seems to be involved in an RecBC-independent recombinational process of DNA repair. It may act with RecF and RecO. In Hamiltonella defensa subsp. Acyrthosiphon pisum (strain 5AT), this protein is Recombination protein RecR.